The chain runs to 295 residues: Small ribosomal subunit protein uS2 (295 aa).

Ser-2 carries the post-translational modification N-acetylserine. Position 43 is a phosphoserine (Ser-43). Lys-52 is subject to N6-acetyllysine. The segment at 54-113 (TWEKLLLAARAIVAIENPADVSVISSRNTGQRAVLKFAAATGATPIAGRFTPGTFTNQIQ) is interaction with PPP1R16B. Lys-89 bears the N6-acetyllysine; alternate mark. Lys-89 participates in a covalent cross-link: Glycyl lysine isopeptide (Lys-Gly) (interchain with G-Cter in SUMO2); alternate. The residue at position 97 (Thr-97) is a Phosphothreonine. Laminin-binding regions lie at residues 161-180 (IPCN…MLAR) and 205-229 (RDPE…EFQG). 5 [DE]-W-[ST] repeats span residues 230–232 (EWT), 247–249 (DWS), 266–268 (DWS), 275–277 (DWS), and 293–295 (EWS). The tract at residues 242 to 295 (QPEVADWSEGVQVPSVPIQQFPTEDWSAQPATEDWSAAPTAQATEWVGTTTEWS) is laminin-binding. A disordered region spans residues 266–295 (DWSAQPATEDWSAAPTAQATEWVGTTTEWS). Residues 280–295 (PTAQATEWVGTTTEWS) are compositionally biased toward polar residues.

The protein belongs to the universal ribosomal protein uS2 family. As to quaternary structure, monomer (37LRP) and homodimer (67LR). Component of the small ribosomal subunit. Mature ribosomes consist of a small (40S) and a large (60S) subunit. The 40S subunit contains about 33 different proteins and 1 molecule of RNA (18S). The 60S subunit contains about 49 different proteins and 3 molecules of RNA (28S, 5.8S and 5S). Interacts with RPS21. Interacts with several laminins including at least LAMB1. Interacts with MDK. The mature dimeric form interacts with PPP1R16B (via its fourth ankyrin repeat). Interacts with PPP1CA only in the presence of PPP1R16B. Acylated. Acylation may be a prerequisite for conversion of the monomeric 37 kDa laminin receptor precursor (37LRP) to the mature dimeric 67 kDa laminin receptor (67LR), and may provide a mechanism for membrane association. Post-translationally, cleaved by stromelysin-3 (ST3) at the cell surface. Cleavage by stromelysin-3 may be a mechanism to alter cell-extracellular matrix interactions.

The protein localises to the cell membrane. Its subcellular location is the cytoplasm. The protein resides in the nucleus. Its function is as follows. Required for the assembly and/or stability of the 40S ribosomal subunit. Required for the processing of the 20S rRNA-precursor to mature 18S rRNA in a late step of the maturation of 40S ribosomal subunits. Also functions as a cell surface receptor for laminin. Plays a role in cell adhesion to the basement membrane and in the consequent activation of signaling transduction pathways. May play a role in cell fate determination and tissue morphogenesis. Also acts as a receptor for several other ligands, including the pathogenic prion protein, viruses, and bacteria. Acts as a PPP1R16B-dependent substrate of PPP1CA. The polypeptide is Small ribosomal subunit protein uS2 (Oryctolagus cuniculus (Rabbit)).